We begin with the raw amino-acid sequence, 388 residues long: DNA replication and repair protein RecF (388 aa).

30-37 contributes to the ATP binding site; the sequence is GNNAQGKS.

This sequence belongs to the RecF family.

The protein resides in the cytoplasm. The RecF protein is involved in DNA metabolism; it is required for DNA replication and normal SOS inducibility. RecF binds preferentially to single-stranded, linear DNA. It also seems to bind ATP. The chain is DNA replication and repair protein RecF from Picosynechococcus sp. (strain ATCC 27264 / PCC 7002 / PR-6) (Agmenellum quadruplicatum).